A 419-amino-acid chain; its full sequence is Ribosomal RNA large subunit methyltransferase G (419 aa).

Over residues 386–408 (KAEPFETHPTEAEAKVEVTESKP) the composition is skewed to basic and acidic residues. The segment at 386-419 (KAEPFETHPTEAEAKVEVTESKPHPQSSLYGTKK) is disordered. Over residues 409–419 (HPQSSLYGTKK) the composition is skewed to polar residues.

The protein belongs to the methyltransferase superfamily. RlmG family.

It is found in the cytoplasm. It carries out the reaction guanosine(1835) in 23S rRNA + S-adenosyl-L-methionine = N(2)-methylguanosine(1835) in 23S rRNA + S-adenosyl-L-homocysteine + H(+). Functionally, specifically methylates the guanine in position 1835 (m2G1835) of 23S rRNA. This Shewanella woodyi (strain ATCC 51908 / MS32) protein is Ribosomal RNA large subunit methyltransferase G.